The sequence spans 449 residues: Probable glycosyltransferase 5 (449 aa).

A compositionally biased stretch (basic and acidic residues) spans 1–14 (MMEKHGGKVTSDRR). Residues 1-24 (MMEKHGGKVTSDRRAGRRQHGQRC) form a disordered region. Residues 1 to 28 (MMEKHGGKVTSDRRAGRRQHGQRCSASD) lie on the Cytoplasmic side of the membrane. Residues 29–49 (AAPLVVVVILIVAALFLILGP) traverse the membrane as a helical; Signal-anchor for type II membrane protein segment. The Lumenal portion of the chain corresponds to 50–449 (TGSSSFTVPR…HPTFRAARPT (400 aa)). Residues 74 to 109 (APPPPPPPAQMQAGANASSEEDSGLPPPRQLTDPPY) form a disordered region. N-linked (GlcNAc...) asparagine glycosylation is found at asparagine 89, asparagine 413, and asparagine 422.

The protein belongs to the glycosyltransferase 34 family.

The protein localises to the golgi apparatus membrane. Its function is as follows. Probable glycosyltransferase that may be involved in the biosynthesis of xyloglucan. The polypeptide is Probable glycosyltransferase 5 (Oryza sativa subsp. japonica (Rice)).